We begin with the raw amino-acid sequence, 84 residues long: Large ribosomal subunit protein bL31B (84 aa).

The protein belongs to the bacterial ribosomal protein bL31 family. Type B subfamily. Part of the 50S ribosomal subunit.

This is Large ribosomal subunit protein bL31B from Photorhabdus laumondii subsp. laumondii (strain DSM 15139 / CIP 105565 / TT01) (Photorhabdus luminescens subsp. laumondii).